An 821-amino-acid polypeptide reads, in one-letter code: Lysosomal beta glucosidase (821 aa).

Positions 1-24 (MKTIKSLFLLSLLIVNLLISSTYG) are cleaved as a signal peptide. Residues 25 to 69 (SSIRVSIVGGEEAEVIEKPRTFGNKRELKLEYSQIYPKKQLNQEN) constitute a propeptide that is removed on maturation. Asparagine 113, asparagine 146, and asparagine 266 each carry an N-linked (GlcNAc...) asparagine glycan. Residue aspartate 363 is part of the active site. Residues asparagine 535, asparagine 555, asparagine 703, and asparagine 721 are each glycosylated (N-linked (GlcNAc...) asparagine).

This sequence belongs to the glycosyl hydrolase 3 family. In terms of processing, glycosylated. The polyoligosaccharides are of the high-mannose type and are highly substituted with both phosphate and sulfate moieties.

The protein localises to the lysosome. It catalyses the reaction Hydrolysis of terminal, non-reducing beta-D-glucosyl residues with release of beta-D-glucose.. The protein is Lysosomal beta glucosidase (gluA) of Dictyostelium discoideum (Social amoeba).